We begin with the raw amino-acid sequence, 246 residues long: Proteasome subunit alpha (246 aa).

Belongs to the peptidase T1A family. In terms of assembly, the 20S proteasome core is composed of 14 alpha and 14 beta subunits that assemble into four stacked heptameric rings, resulting in a barrel-shaped structure. The two inner rings, each composed of seven catalytic beta subunits, are sandwiched by two outer rings, each composed of seven alpha subunits. The catalytic chamber with the active sites is on the inside of the barrel. Has a gated structure, the ends of the cylinder being occluded by the N-termini of the alpha-subunits. Is capped at one or both ends by the proteasome regulatory ATPase, PAN.

The protein localises to the cytoplasm. Its activity is regulated as follows. The formation of the proteasomal ATPase PAN-20S proteasome complex, via the docking of the C-termini of PAN into the intersubunit pockets in the alpha-rings, triggers opening of the gate for substrate entry. Interconversion between the open-gate and close-gate conformations leads to a dynamic regulation of the 20S proteasome proteolysis activity. Functionally, component of the proteasome core, a large protease complex with broad specificity involved in protein degradation. The polypeptide is Proteasome subunit alpha (Methanopyrus kandleri (strain AV19 / DSM 6324 / JCM 9639 / NBRC 100938)).